The following is a 618-amino-acid chain: Transcriptional regulator CPUR_05421 (618 aa).

The segment at residues 14 to 41 (CSHLVGREIGCSRDLAGCRRCTSEGRAC) is a DNA-binding region (zn(2)-C6 fungal-type). The segment at 52-87 (TRRRNRANQDVTRSALYSSNTTPQTISDQATGRPCE) is disordered. Positions 59-81 (NQDVTRSALYSSNTTPQTISDQA) are enriched in polar residues.

It is found in the nucleus. Functionally, transcriptional regulator; part of the ergochrome gene cluster responsible for the typical purple-black color of the ergot sclerotia. The ergochrome gene cluster produces several ergot pigments including the yellow ergochrome secalonic acid and its derivatives, as well as the red anthraquinones endocrocin and clavorubin. This chain is Transcriptional regulator CPUR_05421, found in Claviceps purpurea (strain 20.1) (Ergot fungus).